We begin with the raw amino-acid sequence, 248 residues long: Ribosomal RNA small subunit methyltransferase G (248 aa).

S-adenosyl-L-methionine contacts are provided by residues Gly93, Leu98, 143–144, and Arg161; that span reads AE.

This sequence belongs to the methyltransferase superfamily. RNA methyltransferase RsmG family.

The protein resides in the cytoplasm. Functionally, specifically methylates the N7 position of guanine in position 518 of 16S rRNA. In Mycobacterium leprae (strain Br4923), this protein is Ribosomal RNA small subunit methyltransferase G.